Here is a 130-residue protein sequence, read N- to C-terminus: Small ribosomal subunit protein uS11 (130 aa).

It belongs to the universal ribosomal protein uS11 family. Part of the 30S ribosomal subunit. Interacts with proteins S7 and S18. Binds to IF-3.

Functionally, located on the platform of the 30S subunit, it bridges several disparate RNA helices of the 16S rRNA. Forms part of the Shine-Dalgarno cleft in the 70S ribosome. This chain is Small ribosomal subunit protein uS11, found in Thermoanaerobacter sp. (strain X514).